The primary structure comprises 162 residues: Cyclic pyranopterin monophosphate synthase (162 aa).

Residues leucine 75 to histidine 77 and methionine 113 to glutamate 114 each bind substrate. Residue aspartate 128 is part of the active site.

It belongs to the MoaC family. As to quaternary structure, homohexamer; trimer of dimers.

It catalyses the reaction (8S)-3',8-cyclo-7,8-dihydroguanosine 5'-triphosphate = cyclic pyranopterin phosphate + diphosphate. It functions in the pathway cofactor biosynthesis; molybdopterin biosynthesis. Catalyzes the conversion of (8S)-3',8-cyclo-7,8-dihydroguanosine 5'-triphosphate to cyclic pyranopterin monophosphate (cPMP). This Xanthobacter autotrophicus (strain ATCC BAA-1158 / Py2) protein is Cyclic pyranopterin monophosphate synthase.